The following is a 184-amino-acid chain: Holliday junction branch migration complex subunit RuvA (184 aa).

Positions 1-64 are domain I; it reads MIRAIEGIIT…EDANLLYGFL (64 aa). Positions 65 to 144 are domain II; sequence DTNEQKMFEM…SDESVPGYQN (80 aa). Asn-144 is a region of interest (flexible linker). The domain III stretch occupies residues 144 to 184; that stretch reads NEALLALEALGFKREKIVKILPDLKSTSTSELVKEALKKLA.

The protein belongs to the RuvA family. As to quaternary structure, homotetramer. Forms an RuvA(8)-RuvB(12)-Holliday junction (HJ) complex. HJ DNA is sandwiched between 2 RuvA tetramers; dsDNA enters through RuvA and exits via RuvB. An RuvB hexamer assembles on each DNA strand where it exits the tetramer. Each RuvB hexamer is contacted by two RuvA subunits (via domain III) on 2 adjacent RuvB subunits; this complex drives branch migration. In the full resolvosome a probable DNA-RuvA(4)-RuvB(12)-RuvC(2) complex forms which resolves the HJ.

It is found in the cytoplasm. Its function is as follows. The RuvA-RuvB-RuvC complex processes Holliday junction (HJ) DNA during genetic recombination and DNA repair, while the RuvA-RuvB complex plays an important role in the rescue of blocked DNA replication forks via replication fork reversal (RFR). RuvA specifically binds to HJ cruciform DNA, conferring on it an open structure. The RuvB hexamer acts as an ATP-dependent pump, pulling dsDNA into and through the RuvAB complex. HJ branch migration allows RuvC to scan DNA until it finds its consensus sequence, where it cleaves and resolves the cruciform DNA. The polypeptide is Holliday junction branch migration complex subunit RuvA (Campylobacter curvus (strain 525.92)).